Here is a 113-residue protein sequence, read N- to C-terminus: Nucleoid-associated protein FMG_0513 (113 aa).

A disordered region spans residues 1 to 44; that stretch reads MGNKFRGGMPGMGNMGNMMKQMQKMQRQMEETQKRLEETEVTAT. The segment covering 15-26 has biased composition (low complexity); the sequence is MGNMMKQMQKMQ. Residues 27–38 show a composition bias toward basic and acidic residues; the sequence is RQMEETQKRLEE.

The protein belongs to the YbaB/EbfC family. Homodimer.

The protein resides in the cytoplasm. Its subcellular location is the nucleoid. Binds to DNA and alters its conformation. May be involved in regulation of gene expression, nucleoid organization and DNA protection. This chain is Nucleoid-associated protein FMG_0513, found in Finegoldia magna (strain ATCC 29328 / DSM 20472 / WAL 2508) (Peptostreptococcus magnus).